Here is a 149-residue protein sequence, read N- to C-terminus: Ribonuclease-like 3 (149 aa).

The first 22 residues, Met-1–Gly-22, serve as a signal peptide directing secretion. A Pyrrolidone carboxylic acid modification is found at Gln-23. Residue His-38 is the Proton acceptor of the active site. Cystine bridges form between Cys-48/Cys-109, Cys-66/Cys-120, and Cys-84/Cys-135. Substrate is bound at residue Lys-67–Thr-71. His-142 serves as the catalytic Proton donor.

Belongs to the pancreatic ribonuclease family. In terms of processing, cleavage between Arg-55 and Arg-56 is catalyzed by a membrane-localized Gram-negative bacterium protease (OmpT in E.coli). The excised fragment is then transported to the bacterium cytosol for cleavage of the disulfide bridge linking Cys-48 and Cys-109, thus separating the N-terminal and LF-ZF3. LF-ZF3 but not the N-terminal peptide possesses bactericidal activity. As to expression, strongly expressed in the adult liver and gut, and weakly in the heart and testis.

It is found in the secreted. Functionally, ribonuclease. Angiogenic. Plays a role in host defense. Exhibits strong antibacterial activity against Gram-negative bacteria but mild antibacterial activity against Gram-positive bacteria. The RNase activity is not required for the bactericidal activity. This Danio rerio (Zebrafish) protein is Ribonuclease-like 3.